Reading from the N-terminus, the 443-residue chain is ATP synthase subunit b-delta (443 aa).

The tract at residues 1–168 (MSTFIGQLIG…PSDAALDDAV (168 aa)) is ATP synthase subunit b. A helical transmembrane segment spans residues 4–24 (FIGQLIGFAVIVFLLVRFVVP). The segment at 169 to 443 (GSRMRSTSRE…LASAETQLPD (275 aa)) is ATP synthase subunit delta.

This sequence in the N-terminal section; belongs to the ATPase B chain family. In the C-terminal section; belongs to the ATPase delta chain family. F-type ATPases have 2 components, F(1) - the catalytic core - and F(0) - the membrane proton channel. F(1) has five subunits: alpha(3), beta(3), gamma(1), delta(1), epsilon(1). F(0) has three main subunits: a(1), b(2) and c(10-14). The alpha and beta chains form an alternating ring which encloses part of the gamma chain. F(1) is attached to F(0) by a central stalk formed by the gamma and epsilon chains, while a peripheral stalk is formed by the delta and b chains.

The protein resides in the cell membrane. Functionally, f(1)F(0) ATP synthase produces ATP from ADP in the presence of a proton or sodium gradient. F-type ATPases consist of two structural domains, F(1) containing the extramembraneous catalytic core and F(0) containing the membrane proton channel, linked together by a central stalk and a peripheral stalk. During catalysis, ATP synthesis in the catalytic domain of F(1) is coupled via a rotary mechanism of the central stalk subunits to proton translocation. In terms of biological role, this fusion protein includes a component of the F(0) channel (subunit b) and of the F(1) subunit (subunit delta). Two copies of subunit b and one of delta together form the peripheral 'stator' stalk which links F(1) to F(0). The sequence is that of ATP synthase subunit b-delta (atpFH) from Mycobacterium sp. (strain JLS).